Reading from the N-terminus, the 532-residue chain is Cytokinin dehydrogenase 1 (532 aa).

The first 17 residues, methionine 1–alanine 17, serve as a signal peptide directing secretion. N-linked (GlcNAc...) asparagine glycosylation is found at asparagine 52 and asparagine 63. The 180-residue stretch at threonine 65 to alanine 244 folds into the FAD-binding PCMH-type domain. FAD is bound by residues phenylalanine 100, glycine 102, arginine 103, and glycine 104. Pros-8alpha-FAD histidine is present on histidine 105. FAD-binding residues include serine 106 and glutamine 110. Asparagine 133 is a glycosylation site (N-linked (GlcNAc...) asparagine). Positions 168, 173, 179, 183, and 234 each coordinate FAD. N-linked (GlcNAc...) asparagine glycans are attached at residues asparagine 321 and asparagine 432. FAD contacts are provided by tyrosine 490, serine 525, and glutamine 528.

The protein belongs to the oxygen-dependent FAD-linked oxidoreductase family. Monomer. The cofactor is FAD.

The protein localises to the secreted. It is found in the extracellular space. The enzyme catalyses N(6)-dimethylallyladenine + A + H2O = 3-methyl-2-butenal + adenine + AH2. Its function is as follows. Catalyzes the oxidation of cytokinins, a family of N(6)-substituted adenine derivatives that are plant hormones, where the substituent is an isopentenyl group. The protein is Cytokinin dehydrogenase 1 (CKX1) of Oryza sativa subsp. japonica (Rice).